Consider the following 301-residue polypeptide: Troponin T, cardiac muscle (301 aa).

2 stretches are compositionally biased toward acidic residues: residues 1–42 (MSDL…EEEA) and 50–74 (AETE…DGPV). Disordered stretches follow at residues 1–99 (MSDL…GERV) and 125–223 (ENRK…KKKK). Residue serine 2 is modified to N-acetylserine. A Phosphoserine; by CK2 modification is found at serine 2. Residues 82 to 93 (RPFMPNLVPPKI) show a composition bias toward pro residues. Composition is skewed to basic and acidic residues over residues 125–186 (ENRK…DEAR) and 206–223 (QTER…KKKK). Phosphothreonine; by PKC/PRKCA is present on threonine 207. The residue at position 211 (serine 211) is a Phosphoserine; by PKC/PRKCA. Residue threonine 216 is modified to Phosphothreonine; by PKC/PRKCA and RAF1. Position 297 is a phosphothreonine; by PKC/PRKCA (threonine 297).

The protein belongs to the troponin T family. As to quaternary structure, binds with troponins I and C to make the thin-filament regulatory complex, troponin. Post-translationally, phosphorylation at Thr-216 by PRKCA induces significant reduction in myofilament calcium sensitivity and actomyosin ATPase activity. In terms of tissue distribution, the major isoform in adult heart is CTNT4.

Troponin T is the tropomyosin-binding subunit of troponin, the thin filament regulatory complex which confers calcium-sensitivity to striated muscle actomyosin ATPase activity. In Oryctolagus cuniculus (Rabbit), this protein is Troponin T, cardiac muscle (TNNT2).